The primary structure comprises 1405 residues: ATP-dependent helicase/nuclease subunit A (1405 aa).

Residues 7-482 (REWTPDQLAA…ILLKANFRSR (476 aa)) enclose the UvrD-like helicase ATP-binding domain. 28 to 35 (AAAGAGKT) serves as a coordination point for ATP. The region spanning 551-914 (PEAVGAGKGG…RVMSIHRAKG (364 aa)) is the UvrD-like helicase C-terminal domain. 2 disordered regions span residues 778–797 (QEPW…KAVP) and 1132–1165 (AGKT…QDET). Low complexity predominate over residues 787-796 (GPGAAAGKAV).

Belongs to the helicase family. AddA subfamily. As to quaternary structure, heterodimer of AddA and AddB/RexB. Mg(2+) serves as cofactor.

The enzyme catalyses Couples ATP hydrolysis with the unwinding of duplex DNA by translocating in the 3'-5' direction.. The catalysed reaction is ATP + H2O = ADP + phosphate + H(+). In terms of biological role, the heterodimer acts as both an ATP-dependent DNA helicase and an ATP-dependent, dual-direction single-stranded exonuclease. Recognizes the chi site generating a DNA molecule suitable for the initiation of homologous recombination. The AddA nuclease domain is required for chi fragment generation; this subunit has the helicase and 3' -&gt; 5' nuclease activities. The protein is ATP-dependent helicase/nuclease subunit A of Moorella thermoacetica (strain ATCC 39073 / JCM 9320).